The following is a 638-amino-acid chain: Gamma-aminobutyric acid receptor subunit theta (638 aa).

The first 21 residues, 1-21 (MGIRGMLRAAALLLLIRTWLA), serve as a signal peptide directing secretion. Residues 22–267 (ESNGPSPTPK…FQVQREVRSY (246 aa)) lie on the Extracellular side of the membrane. Asn-127 carries an N-linked (GlcNAc...) asparagine glycan. A disulfide bond links Cys-183 and Cys-197. The chain crosses the membrane as a helical span at residues 268–288 (LVQVYWPTVLTTILSWISFWM). The Cytoplasmic segment spans residues 289 to 296 (NYDSSAAR). The chain crosses the membrane as a helical span at residues 297–314 (VTIGLTSILVLTTIDSHM). At 315–325 (RDKLPHISCIK) the chain is on the extracellular side. Residues 326 to 346 (AIDIYILVCLFFVFLSLLEYV) form a helical membrane-spanning segment. Over 347–617 (YINYLFFSQV…NRVPKVDRWS (271 aa)) the chain is Cytoplasmic. A disordered region spans residues 491–515 (ACDDEDSEESLSSEESHGHGSSHTG). Positions 492-502 (CDDEDSEESLS) are enriched in acidic residues. A helical transmembrane segment spans residues 618 to 638 (RFLFPLSFGLFNVVYWLYHVY).

The protein belongs to the ligand-gated ion channel (TC 1.A.9) family. Gamma-aminobutyric acid receptor (TC 1.A.9.5) subfamily. GABRQ sub-subfamily. In terms of assembly, heteropentamer, formed by a combination of alpha (GABRA1-6), beta (GABRB1-3), gamma (GABRG1-3), delta (GABRD), epsilon (GABRE), rho (GABRR1-3), pi (GABRP) and theta (GABRQ) chains, each subunit exhibiting distinct physiological and pharmacological properties. Expressed in brain, lung, and spleen.

The protein resides in the postsynaptic cell membrane. Its subcellular location is the cell membrane. The enzyme catalyses chloride(in) = chloride(out). With respect to regulation, potentiated by etomidate, propofol, pregnanolone and pentobarbital. In terms of biological role, theta subunit of the heteropentameric ligand-gated chloride channel gated by gamma-aminobutyric acid (GABA), a major inhibitory neurotransmitter in the brain. GABA-gated chloride channels, also named GABA(A) receptors (GABAAR), consist of five subunits arranged around a central pore and contain GABA active binding site(s) located at the alpha and beta subunit interfaces. When activated by GABA, GABAARs selectively allow the flow of chloride anions across the cell membrane down their electrochemical gradient. The sequence is that of Gamma-aminobutyric acid receptor subunit theta from Mus musculus (Mouse).